Here is a 206-residue protein sequence, read N- to C-terminus: Large ribosomal subunit protein uL22m (206 aa).

A mitochondrion-targeting transit peptide spans 1–40 (MAAALLRELGALRVPNLRIWATQTLRVLPPSCIHTSASLD).

Belongs to the universal ribosomal protein uL22 family. Component of the mitochondrial ribosome large subunit (39S) which comprises a 16S rRNA and about 50 distinct proteins.

The protein resides in the mitochondrion. The sequence is that of Large ribosomal subunit protein uL22m (Mrpl22) from Mus musculus (Mouse).